The following is a 238-amino-acid chain: Uracil-DNA glycosylase (238 aa).

The Proton acceptor role is filled by aspartate 72.

It belongs to the uracil-DNA glycosylase (UDG) superfamily. UNG family.

The protein resides in the cytoplasm. The catalysed reaction is Hydrolyzes single-stranded DNA or mismatched double-stranded DNA and polynucleotides, releasing free uracil.. Excises uracil residues from the DNA which can arise as a result of misincorporation of dUMP residues by DNA polymerase or due to deamination of cytosine. The chain is Uracil-DNA glycosylase from Chromobacterium violaceum (strain ATCC 12472 / DSM 30191 / JCM 1249 / CCUG 213 / NBRC 12614 / NCIMB 9131 / NCTC 9757 / MK).